The sequence spans 234 residues: Inosine triphosphate pyrophosphatase (234 aa).

11–16 (SGNKGK) is an ITP binding site. Mg(2+) is bound at residue Glu-40. ITP contacts are provided by residues Lys-53, 81–82 (DT), Lys-98, 176–179 (FGWD), Lys-203, and 208–209 (HR).

This sequence belongs to the HAM1 NTPase family. As to quaternary structure, homodimer. The cofactor is Mg(2+). Mn(2+) is required as a cofactor.

The protein localises to the cytoplasm. It catalyses the reaction ITP + H2O = IMP + diphosphate + H(+). The enzyme catalyses dITP + H2O = dIMP + diphosphate + H(+). It carries out the reaction XTP + H2O = XMP + diphosphate + H(+). Pyrophosphatase that hydrolyzes non-canonical purine nucleotides such as inosine triphosphate (ITP), deoxyinosine triphosphate (dITP) or xanthosine 5'-triphosphate (XTP) to their respective monophosphate derivatives. The enzyme does not distinguish between the deoxy- and ribose forms. Probably excludes non-canonical purines from RNA and DNA precursor pools, thus preventing their incorporation into RNA and DNA and avoiding chromosomal lesions. This Leishmania major protein is Inosine triphosphate pyrophosphatase.